The primary structure comprises 1225 residues: Clustered mitochondria protein homolog (1225 aa).

The tract at residues 1–22 (MAQTNGEMEHSKESPEQITNGN) is disordered. One can recognise a Clu domain in the interval 281–532 (QESNNQKDLL…RVTPLDVAWN (252 aa)). 2 disordered regions span residues 577–605 (EEAA…EALD) and 846–878 (ANGV…SAAA). 3 TPR repeats span residues 949 to 982 (AKLY…TERT), 991 to 1024 (ILSY…WKII), and 1033 to 1066 (ITTM…CESL). The span at 1153–1184 (RTTLGTQIQPQVGQSTADVSAPSQASNSSIDS) shows a compositional bias: polar residues. The disordered stretch occupies residues 1153–1225 (RTTLGTQIQP…KLRGSKKSSA (73 aa)).

The protein belongs to the CLU family. As to quaternary structure, may associate with the eukaryotic translation initiation factor 3 (eIF-3) complex.

The protein resides in the cytoplasm. Functionally, mRNA-binding protein involved in proper cytoplasmic distribution of mitochondria. The sequence is that of Clustered mitochondria protein homolog from Emericella nidulans (strain FGSC A4 / ATCC 38163 / CBS 112.46 / NRRL 194 / M139) (Aspergillus nidulans).